A 484-amino-acid chain; its full sequence is Secreted RxLR effector protein 104 (484 aa).

Positions 1-24 (MRSAYPVLTALLVVASSQIAAGSG) are cleaved as a signal peptide. Positions 48-65 (RFLRGSRDVHNNVANEER) match the RxLR-dEER motif. N175 carries N-linked (GlcNAc...) asparagine glycosylation. Residues 324-463 (ENPKGQSPYP…SSSVLTPEDV (140 aa)) are disordered. Residues 327-346 (KGQSPYPSTPLTAASTSKGG) are compositionally biased toward polar residues. The segment covering 402–413 (SSSSGPSRAFAP) has biased composition (low complexity). Over residues 418–428 (DQTFITENSRL) the composition is skewed to polar residues.

This sequence belongs to the RxLR effector family.

It localises to the secreted. The protein resides in the host nucleus. Functionally, secreted effector that completely suppresses the host cell death induced by cell death-inducing proteins. The polypeptide is Secreted RxLR effector protein 104 (Plasmopara viticola (Downy mildew of grapevine)).